A 422-amino-acid chain; its full sequence is Replication factor C large subunit (422 aa).

63–70 is a binding site for ATP; sequence GPPGIGKT.

This sequence belongs to the activator 1 small subunits family. RfcL subfamily. As to quaternary structure, heteromultimer composed of small subunits (RfcS) and large subunits (RfcL).

In terms of biological role, part of the RFC clamp loader complex which loads the PCNA sliding clamp onto DNA. This is Replication factor C large subunit from Pyrobaculum neutrophilum (strain DSM 2338 / JCM 9278 / NBRC 100436 / V24Sta) (Thermoproteus neutrophilus).